A 333-amino-acid polypeptide reads, in one-letter code: Ketol-acid reductoisomerase (NADP(+)) (333 aa).

The KARI N-terminal Rossmann domain maps to 1–179; it reads MFYDDDADLS…GGTRAGVIKT (179 aa). Residues 22-25, Lys45, Ser48, Ser50, and 80-83 contribute to the NADP(+) site; these read YGSQ and DTAQ. His105 is an active-site residue. Residue Gly131 coordinates NADP(+). In terms of domain architecture, KARI C-terminal knotted spans 180 to 325; it reads TFKDETETDL…KKLRDLMSWV (146 aa). Asp188, Glu192, Glu224, and Glu228 together coordinate Mg(2+). Ser249 contributes to the substrate binding site.

Belongs to the ketol-acid reductoisomerase family. Mg(2+) serves as cofactor.

It carries out the reaction (2R)-2,3-dihydroxy-3-methylbutanoate + NADP(+) = (2S)-2-acetolactate + NADPH + H(+). The catalysed reaction is (2R,3R)-2,3-dihydroxy-3-methylpentanoate + NADP(+) = (S)-2-ethyl-2-hydroxy-3-oxobutanoate + NADPH + H(+). Its pathway is amino-acid biosynthesis; L-isoleucine biosynthesis; L-isoleucine from 2-oxobutanoate: step 2/4. It functions in the pathway amino-acid biosynthesis; L-valine biosynthesis; L-valine from pyruvate: step 2/4. Its function is as follows. Involved in the biosynthesis of branched-chain amino acids (BCAA). Catalyzes an alkyl-migration followed by a ketol-acid reduction of (S)-2-acetolactate (S2AL) to yield (R)-2,3-dihydroxy-isovalerate. In the isomerase reaction, S2AL is rearranged via a Mg-dependent methyl migration to produce 3-hydroxy-3-methyl-2-ketobutyrate (HMKB). In the reductase reaction, this 2-ketoacid undergoes a metal-dependent reduction by NADPH to yield (R)-2,3-dihydroxy-isovalerate. This is Ketol-acid reductoisomerase (NADP(+)) from Mycobacterium ulcerans (strain Agy99).